Here is a 283-residue protein sequence, read N- to C-terminus: Bifunctional protein FolD (283 aa).

Residues 163–165, S188, and I229 contribute to the NADP(+) site; that span reads GRS.

It belongs to the tetrahydrofolate dehydrogenase/cyclohydrolase family. In terms of assembly, homodimer.

It carries out the reaction (6R)-5,10-methylene-5,6,7,8-tetrahydrofolate + NADP(+) = (6R)-5,10-methenyltetrahydrofolate + NADPH. It catalyses the reaction (6R)-5,10-methenyltetrahydrofolate + H2O = (6R)-10-formyltetrahydrofolate + H(+). It functions in the pathway one-carbon metabolism; tetrahydrofolate interconversion. Catalyzes the oxidation of 5,10-methylenetetrahydrofolate to 5,10-methenyltetrahydrofolate and then the hydrolysis of 5,10-methenyltetrahydrofolate to 10-formyltetrahydrofolate. This chain is Bifunctional protein FolD, found in Latilactobacillus sakei subsp. sakei (strain 23K) (Lactobacillus sakei subsp. sakei).